The chain runs to 202 residues: Protein phosphatase 1 regulatory subunit 1B (202 aa).

At Met1 the chain carries N-acetylmethionine. Residues 1 to 202 are disordered; sequence MDPKDRKKIQ…QRPAHPEPGT (202 aa). At Thr34 the chain carries Phosphothreonine; by PKA. Positions 41–63 are enriched in basic and acidic residues; that stretch reads LSEHSSPEEEASPHQRASGEGHH. Residues Ser45 and Ser46 each carry the phosphoserine modification. The residue at position 75 (Thr75) is a Phosphothreonine; by CDK5. Polar residues predominate over residues 89-100; that stretch reads HLQSISNLGENQ. A Phosphoserine modification is found at Ser102. Residues 109–118 are compositionally biased toward basic and acidic residues; the sequence is GELRELGYPR. Over residues 119 to 136 the composition is skewed to acidic residues; the sequence is EEEEEEEEEDEEEEEDSQ. The residue at position 135 (Ser135) is a Phosphoserine. Positions 191–202 are enriched in basic and acidic residues; the sequence is EPQRPAHPEPGT.

Belongs to the protein phosphatase inhibitor 1 family. Dopamine- and cyclic AMP-regulated neuronal phosphoprotein. In terms of processing, phosphorylation of Thr-34 is required for activity.

It localises to the cytoplasm. Its function is as follows. Inhibitor of protein-phosphatase 1. This chain is Protein phosphatase 1 regulatory subunit 1B (PPP1R1B), found in Bos taurus (Bovine).